The sequence spans 1311 residues: Ubiquitin carboxyl-terminal hydrolase 36 (1311 aa).

Low complexity-rich tracts occupy residues 120 to 134 (AAAA…SAGS) and 156 to 174 (STPT…SSSS). Residues 120-189 (AAAATNNGNS…NPNELPKPKR (70 aa)) are disordered. In terms of domain architecture, USP spans 212-533 (AGMINVGNTC…NSYIMFYELD (322 aa)). The active-site Nucleophile is Cys-221. The active-site Proton acceptor is His-492. The segment at 546–575 (NGLRQLSNGHHHHQQQQQQHQQQQQQQPTV) is disordered. Residues 560-572 (QQQQQHQQQQQQQ) are compositionally biased toward low complexity. Ser-581 carries the phosphoserine modification. Disordered regions lie at residues 587-620 (TRFI…GHSQ), 640-1095 (KFQE…GCLN), and 1136-1311 (DHGD…QQQS). 3 stretches are compositionally biased toward low complexity: residues 605–616 (TTTTTATNNTTN), 660–716 (APAV…QQQQ), and 759–774 (TLTL…STPT). Residue Thr-767 is modified to Phosphothreonine. Residues Ser-787 and Ser-789 each carry the phosphoserine modification. The segment covering 795-826 (SSGTPSSSTPTTTTTAAAAAASSPMQATAAAT) has biased composition (low complexity). A compositionally biased stretch (basic residues) spans 836 to 853 (ARKRSLPDHHHHHPHHHV). Polar residues predominate over residues 869–879 (PATNFNSSSSK). Over residues 880–889 (QKTDAIDEIF) the composition is skewed to basic and acidic residues. Residues 896–905 (NKKRINNKNQ) are compositionally biased toward basic residues. Acidic residues predominate over residues 910–920 (GDEEEDDEETL). Low complexity-rich tracts occupy residues 925–942 (NNSS…PTTN) and 950–979 (VSSS…STSA). The segment covering 980-989 (PPSPKTPPSP) has biased composition (pro residues). Ser-982 bears the Phosphoserine mark. Thr-985 carries the phosphothreonine modification. The residue at position 988 (Ser-988) is a Phosphoserine. A compositionally biased stretch (acidic residues) spans 1006–1020 (DDDDDEEEEDEDDEE). The span at 1037–1050 (PFSSQQKPTPSPST) shows a compositional bias: low complexity. Phosphoserine is present on Ser-1047. Phosphothreonine is present on Thr-1050. The segment covering 1060–1081 (FNGTSSSTPHVGNGYQSEPSTP) has biased composition (polar residues). Low complexity-rich tracts occupy residues 1154–1176 (VVTT…TADA) and 1204–1221 (TANG…PGYN). The segment covering 1246–1255 (QHASSSYRSN) has biased composition (polar residues). Over residues 1267-1276 (GGNGGGGSGG) the composition is skewed to gly residues.

This sequence belongs to the peptidase C19 family. Interacts with atms/PAF1, but not with CycT.

Its subcellular location is the nucleus. The protein localises to the nucleolus. The enzyme catalyses Thiol-dependent hydrolysis of ester, thioester, amide, peptide and isopeptide bonds formed by the C-terminal Gly of ubiquitin (a 76-residue protein attached to proteins as an intracellular targeting signal).. Functionally, required for maintaining multiple types of adult stem cells, including male and female germline, epithelial follicle cell and intestinal stem cells. May function as a transcriptional repressor by continually deubiquiting histone H2B at the promoters of genes critical for cellular differentiation, thereby preventing histone H3 'Lys-4' trimethylation (H3K4). Controls selective autophagy activation by ubiquitinated proteins. The protein is Ubiquitin carboxyl-terminal hydrolase 36 (Usp36) of Drosophila willistoni (Fruit fly).